The following is a 513-amino-acid chain: Teichoic acid ribitol-phosphate polymerase TarK (513 aa).

It belongs to the CDP-glycerol glycerophosphotransferase family.

Its subcellular location is the cell membrane. It catalyses the reaction 4-O-[di(2R)-glycerylphospho]-N-acetyl-beta-D-mannosaminyl-(1-&gt;4)-N-acetyl-alpha-D-glucosaminyl di-trans,octa-cis-undecaprenyl diphosphate + n CDP-L-ribitol = 4-O-[(D-ribitylphospho)(n)-di{(2R)-glycerylphospho}]-N-acetyl-beta-D-mannosaminyl-(1-&gt;4)-N-acetyl-alpha-D-glucosaminyl di-trans,octa-cis-undecaprenyl diphosphate + n CMP + n H(+). It participates in cell wall biogenesis; poly(ribitol phosphate) teichoic acid biosynthesis. Can catalyze the polymerization of the main chain of the major teichoic acid by sequential transfer of ribitol phosphate units from CDP-ribitol to the second glycerol phosphate attached to the disaccharide linkage unit. This Staphylococcus aureus (strain NCTC 8325 / PS 47) protein is Teichoic acid ribitol-phosphate polymerase TarK (tarK).